The chain runs to 232 residues: MSKLGKFFKGTRSSRARAAPSAQEALARLRETEEMLAKKQEYLENRIQRELALAKKHGSQNKRAALQALKRKKRFEKQLTQVDGTLSTIEFQREALENSHTNTEVLRNMGFAAKAMKAVHDNMDLNKIDDLMQDITEQQDIAQEISEAFSQRVQFADGFDEAELLAELEELEQEELNKKMTSLELPNVPSSSLPAQPSRKASMPSSVHRSRAASSRRAEEDDDFKQLAAWAT.

Disordered stretches follow at residues 1 to 23 (MSKL…PSAQ) and 177 to 232 (NKKM…AWAT). Positions 1–153 (MSKLGKFFKG…EISEAFSQRV (153 aa)) are intramolecular interaction with C-terminus. Coiled coils occupy residues 21–45 (SAQE…YLEN) and 125–185 (LNKI…SLEL). The segment at 154-232 (QFADGFDEAE…DFKQLAAWAT (79 aa)) is intramolecular interaction with N-terminus. Residue Ser210 is modified to Phosphoserine; by AURKB.

Belongs to the SNF7 family. As to quaternary structure, probable core component of the endosomal sorting required for transport complex III (ESCRT-III). ESCRT-III components are thought to multimerize to form a flat lattice on the perimeter membrane of the endosome. Several assembly forms of ESCRT-III may exist that interact and act sequentially. Self-associates. Interacts with CHMP2A. Interacts with CHMP4A. Interacts with CHMP4B. Interacts with CHMP6. Interacts with VPS4A. Interacts with PDCD6IP; the interaction is direct. Post-translationally, phosphorylated at Ser-210 by AURKB during cytokinesis: together with ZFYVE19/ANCHR, phosphorylated CHMP4C retains abscission-competent VPS4 (VPS4A and/or VPS4B) at the midbody ring until abscission checkpoint signaling is terminated at late cytokinesis.

It localises to the cytoplasm. It is found in the cytosol. The protein resides in the late endosome membrane. The protein localises to the midbody. Its subcellular location is the midbody ring. Probable core component of the endosomal sorting required for transport complex III (ESCRT-III) which is involved in multivesicular bodies (MVBs) formation and sorting of endosomal cargo proteins into MVBs. MVBs contain intraluminal vesicles (ILVs) that are generated by invagination and scission from the limiting membrane of the endosome and mostly are delivered to lysosomes enabling degradation of membrane proteins, such as stimulated growth factor receptors, lysosomal enzymes and lipids. The MVB pathway appears to require the sequential function of ESCRT-O, -I,-II and -III complexes. ESCRT-III proteins mostly dissociate from the invaginating membrane before the ILV is released. The ESCRT machinery also functions in topologically equivalent membrane fission events, such as the terminal stages of cytokinesis. Key component of the cytokinesis checkpoint, a process required to delay abscission to prevent both premature resolution of intercellular chromosome bridges and accumulation of DNA damage: upon phosphorylation by AURKB, together with ZFYVE19/ANCHR, retains abscission-competent VPS4 (VPS4A and/or VPS4B) at the midbody ring until abscission checkpoint signaling is terminated at late cytokinesis. Deactivation of AURKB results in dephosphorylation of CHMP4C followed by its dissociation from ANCHR and VPS4 and subsequent abscission. ESCRT-III proteins are believed to mediate the necessary vesicle extrusion and/or membrane fission activities, possibly in conjunction with the AAA ATPase VPS4. CHMP4A/B/C are required for the exosomal release of SDCBP, CD63 and syndecan. The polypeptide is Charged multivesicular body protein 4c (Chmp4c) (Mus musculus (Mouse)).